A 330-amino-acid polypeptide reads, in one-letter code: Inactive hydroxysteroid dehydrogenase-like protein 1 (330 aa).

Alanine 2 carries the N-acetylalanine modification. A required for mitochondria translocation region spans residues alanine 2–alanine 82. NADP(+) contacts are provided by residues glycine 74–glycine 80, aspartate 125, and lysine 222.

The protein belongs to the short-chain dehydrogenases/reductases (SDR) family. 17-beta-HSD 3 subfamily. In terms of assembly, interacts with STYXL1.

It localises to the mitochondrion. This chain is Inactive hydroxysteroid dehydrogenase-like protein 1 (Hsdl1), found in Mus musculus (Mouse).